Consider the following 219-residue polypeptide: Ribose-5-phosphate isomerase A (219 aa).

Residues 29-32 (TGST), 82-85 (DGAD), and 95-98 (KGGG) contribute to the substrate site. Glu-104 serves as the catalytic Proton acceptor. Lys-122 is a substrate binding site.

This sequence belongs to the ribose 5-phosphate isomerase family. As to quaternary structure, homodimer.

It catalyses the reaction aldehydo-D-ribose 5-phosphate = D-ribulose 5-phosphate. It functions in the pathway carbohydrate degradation; pentose phosphate pathway; D-ribose 5-phosphate from D-ribulose 5-phosphate (non-oxidative stage): step 1/1. Functionally, catalyzes the reversible conversion of ribose-5-phosphate to ribulose 5-phosphate. In Chromobacterium violaceum (strain ATCC 12472 / DSM 30191 / JCM 1249 / CCUG 213 / NBRC 12614 / NCIMB 9131 / NCTC 9757 / MK), this protein is Ribose-5-phosphate isomerase A.